A 692-amino-acid polypeptide reads, in one-letter code: uncharacterized protein (692 aa).

Residues 1–39 constitute a chloroplast transit peptide; the sequence is MLRLPSSMPIVSFPANPNLLINPQPSWPSRRGNSAVVVS. In terms of domain architecture, Protein kinase spans 189–523; it reads EISPEPVAAA…RLESLLSESL (335 aa). ATP contacts are provided by residues 195-203 and lysine 218; that span reads VAAASLGQV. Aspartate 343 acts as the Proton acceptor in catalysis.

Belongs to the protein kinase superfamily. ADCK protein kinase family.

Its subcellular location is the plastid. The protein localises to the chloroplast. The protein resides in the plastoglobule. This is an uncharacterized protein from Arabidopsis thaliana (Mouse-ear cress).